A 552-amino-acid chain; its full sequence is Putative transport protein YE4162 (552 aa).

Transmembrane regions (helical) follow at residues 1–21 (MSAI…GLWI), 26–46 (VYGV…VGHF), 65–85 (FGLI…FFSS), 96–116 (FAIL…KLFA), 119–139 (LPII…LGAA), and 158–178 (MGYA…MWLI). RCK C-terminal domains lie at 192 to 276 (EFDS…VVGE) and 279 to 361 (DVTL…VVGN). Transmembrane regions (helical) follow at residues 371–391 (MLPV…PLFI), 393–413 (GFPA…ALIL), 439–459 (IVLF…NTLV), 464–484 (LAWI…VGIL), 493–513 (YLTL…LAFA), and 530–550 (VYPL…VLFW).

The protein belongs to the AAE transporter (TC 2.A.81) family. YidE subfamily.

The protein localises to the cell membrane. This is Putative transport protein YE4162 from Yersinia enterocolitica serotype O:8 / biotype 1B (strain NCTC 13174 / 8081).